A 176-amino-acid polypeptide reads, in one-letter code: Lipoprotein signal peptidase (176 aa).

The next 4 helical transmembrane spans lie at 11-31 (AFVA…LDQL), 38-58 (ATMQ…VLVF), 76-96 (WFFT…MHQH), and 101-121 (LLPA…VDRL). Residues D128 and D146 contribute to the active site. Residues 139–159 (WPAFNLADSAITLGVGLMLWA) form a helical membrane-spanning segment.

Belongs to the peptidase A8 family.

The protein resides in the cell inner membrane. It catalyses the reaction Release of signal peptides from bacterial membrane prolipoproteins. Hydrolyzes -Xaa-Yaa-Zaa-|-(S,diacylglyceryl)Cys-, in which Xaa is hydrophobic (preferably Leu), and Yaa (Ala or Ser) and Zaa (Gly or Ala) have small, neutral side chains.. It participates in protein modification; lipoprotein biosynthesis (signal peptide cleavage). Functionally, this protein specifically catalyzes the removal of signal peptides from prolipoproteins. This chain is Lipoprotein signal peptidase, found in Azoarcus sp. (strain BH72).